The following is a 645-amino-acid chain: Sodium/potassium/calcium exchanger 3 (645 aa).

The first 43 residues, 1 to 43 (MPPPGDQDCARRRSRRRRRDLLLSQLCFLASVALLLWSLSSLR), serve as a signal peptide directing secretion. Residues 44 to 106 (EQKELDLMDL…DIFSNEDRRQ (63 aa)) are Extracellular-facing. N70 and N85 each carry an N-linked (GlcNAc...) asparagine glycan. Residues 107–127 (GAVVLHVLCAMYMFYALAIVC) form a helical membrane-spanning segment. Over 128-151 (DDFFVPSLEKICERLHLSEDVAGA) the chain is Cytoplasmic. The stretch at 148–188 (VAGATFMAAGSSAPELFTSVIGVFITKGDVGVGTIVGSAVF) is one Alpha-1 repeat. A helical transmembrane segment spans residues 152–172 (TFMAAGSSAPELFTSVIGVFI). Residues 173 to 181 (TKGDVGVGT) are Extracellular-facing. The chain crosses the membrane as a helical span at residues 182-202 (IVGSAVFNILCIIGVCGLFAG). Residues 203–209 (QVVALSS) lie on the Cytoplasmic side of the membrane. The helical transmembrane segment at 210 to 230 (WCLLRDSIYYTLSVVALIVFI) threads the bilayer. The Extracellular portion of the chain corresponds to 231-234 (YDEK). A helical transmembrane segment spans residues 235–255 (VSWWESLVLVLMYLIYIVIMK). The Cytoplasmic portion of the chain corresponds to 256–486 (YNACIHQCFE…WFMVTFASST (231 aa)). At S307 the chain carries Phosphoserine. 2 disordered regions span residues 379–398 (TVENGTGPSSAPDRGVNGTR) and 404–442 (AETDNETENENEDNENNENDEEEEEDEDDDEGPYTPFDP). The segment covering 404–435 (AETDNETENENEDNENNENDEEEEEDEDDDEG) has biased composition (acidic residues). Residues 487–507 (LWIAAFSYMMVWMVTIIGYTL) form a helical membrane-spanning segment. Topologically, residues 508-512 (GIPDV) are extracellular. A helical membrane pass occupies residues 513–533 (IMGITFLAAGTSVPDCMASLI). The stretch at 520–551 (AAGTSVPDCMASLIVARQGMGDMAVSNSIGSN) is one Alpha-2 repeat. Residues 534-551 (VARQGMGDMAVSNSIGSN) are Cytoplasmic-facing. Residues 552 to 572 (VFDILIGLGLPWALQTLAVDY) traverse the membrane as a helical segment. Residues 573 to 582 (GSYIRLNSRG) are Extracellular-facing. A helical membrane pass occupies residues 583–603 (LIYSVGLLLASVFVTVFGVHL). At 604–617 (NKWQLDKKLGCGCL) the chain is on the cytoplasmic side. A helical transmembrane segment spans residues 618-638 (FLYGVFLCFSIMTEFNVFTFV). Residues 639 to 645 (NLPMCGD) lie on the Extracellular side of the membrane.

It belongs to the Ca(2+):cation antiporter (CaCA) (TC 2.A.19) family. SLC24A subfamily. Abundant in the brain. Highest levels found in selected thalamic nuclei, hippocampal CA1 neurons and in layer IV of the cerebral cortex. Expressed in dental tissues.

The protein localises to the cell membrane. The catalysed reaction is Ca(2+)(out) + K(+)(out) + 4 Na(+)(in) = Ca(2+)(in) + K(+)(in) + 4 Na(+)(out). Calcium, potassium:sodium antiporter that transports 1 Ca(2+) and 1 K(+) in exchange for 4 Na(+). The chain is Sodium/potassium/calcium exchanger 3 (Slc24a3) from Mus musculus (Mouse).